Here is a 182-residue protein sequence, read N- to C-terminus: UPF0316 protein lp_1140 (182 aa).

The next 3 helical transmembrane spans lie at 1–21 (MHIDMGMLVLIFIINFAYITL), 36–56 (FAAFASVIEITIYVLGLSLVL), and 62–82 (PINLVVYALGYGVGVYVGMVI).

The protein belongs to the UPF0316 family.

The protein localises to the cell membrane. The sequence is that of UPF0316 protein lp_1140 from Lactiplantibacillus plantarum (strain ATCC BAA-793 / NCIMB 8826 / WCFS1) (Lactobacillus plantarum).